A 341-amino-acid chain; its full sequence is MKEFDYDKLVTAIDRFSPSKLIGKGSHGYVYKALLHHQDVDETRQRVVAIKTPSSLSPSSPSSSSSSKSEQTKKLENEIDVMSSLPYHPHVLSFLGHAEKKLMVVEYMPNESLYQLLHVSTDPLPTWLKRIEIALQIASAVHFLHEHGIIHRDIKSENILFDSNWEAKLADFGLAVDFGGDKKIRPAPAGTIGYLDPCYTLPENLSMKTDVYSYGVVLLEIVSCRKAIDVSRSPASIVDWAVPLIKEGRIGEICGGGGGGSGVFRGMSLRLLRMAARCVSSDVESRPCFGEITAEIVACLAEPLKSLPLWMSVLRRVVKLKRRKKRLRETLTWPGQTCRVW.

The Protein kinase domain occupies 16–298 (FSPSKLIGKG…FGEITAEIVA (283 aa)). ATP-binding positions include 22–30 (IGKGSHGYV) and lysine 51. Residues 52–75 (TPSSLSPSSPSSSSSSKSEQTKKL) are disordered. The segment covering 53–69 (PSSLSPSSPSSSSSSKS) has biased composition (low complexity). Aspartate 153 functions as the Proton acceptor in the catalytic mechanism. Residues 311–332 (MSVLRRVVKLKRRKKRLRETLT) are a coiled coil.

Belongs to the protein kinase superfamily. Ser/Thr protein kinase family. In terms of tissue distribution, ubiquitous. Higher expression in mature stamina and pollen.

It carries out the reaction L-seryl-[protein] + ATP = O-phospho-L-seryl-[protein] + ADP + H(+). It catalyses the reaction L-threonyl-[protein] + ATP = O-phospho-L-threonyl-[protein] + ADP + H(+). This chain is Serine/threonine-protein kinase-like protein At5g23170, found in Arabidopsis thaliana (Mouse-ear cress).